Consider the following 420-residue polypeptide: Glycogen synthase kinase-3 beta (420 aa).

Over residues 1–22 (MSGRPRTTSFAESCKPVQQPSA) the composition is skewed to polar residues. Residues 1–53 (MSGRPRTTSFAESCKPVQQPSAFGSMKVSRDKDGSKVTTVVATPGQGPDRPQE) form a disordered region. Ser9 is modified (phosphoserine; by PKB/AKT1, RPS6KA3 and SGK3). Cys14 carries the S-palmitoyl cysteine lipid modification. Residues 56 to 340 (YTDTKVIGNG…PLEACAHSFF (285 aa)) enclose the Protein kinase domain. Residues 62–70 (IGNGSFGVV) and Lys85 contribute to the ATP site. The active-site Proton acceptor is Asp181. Residue Tyr216 is modified to Phosphotyrosine. The interval 385–420 (QAAASPPANATAASDTNAGDRGQTNNAASASASNST) is disordered. Composition is skewed to low complexity over residues 386–401 (AAASPPANATAASDTN) and 409–420 (NNAASASASNST). At Ser389 the chain carries Phosphoserine.

Belongs to the protein kinase superfamily. CMGC Ser/Thr protein kinase family. GSK-3 subfamily. In terms of assembly, monomer. Interacts with DAB2IP (via C2 domain); the interaction stimulates GSK3B kinase activation. Interacts (via C2 domain) with PPP2CA. Interacts with ARRB2, AXIN1, CABYR, DISC1, MMP2, MUC1, NIN, PRUNE1 and ZBED3. Interacts with AXIN1; the interaction mediates hyperphosphorylation of CTNNB1 leading to its ubiquitination and destruction. Interacts with and phosphorylates SNAI1. Interacts with DNM1L (via a C-terminal domain). Found in a complex composed of MACF1, APC, AXIN1, CTNNB1 and GSK3B. Interacts with SGK3. Interacts with the CLOCK-BMAL1 heterodimer. Interacts with the BMAL1. Interacts with CTNND2. The complex composed, at least, of APC, CTNNB1 and GSK3B interacts with JPT1; the interaction requires the inactive form of GSK3B (phosphorylated at 'Ser-9'). Forms a complex composed of PRKAR2A or PRKAR2B, GSK3B and GSKIP through GSKIP interaction; facilitates PKA-induced phosphorylation and regulates GSK3B activity. Interacts with GSKIP. Interacts with GID8. Interacts with PIWIL2. Interacts with LMBR1L. Interacts with DDX3X. Interacts with BIRC2. Interacts with TNFRSF10B; TNFRSF10B stimulation inhibits GSK3B kinase activity. Found in a complex with SLC39A6, SLC39A10 and with GSK3B that controls NCAM1 phosphorylation. Interacts with PKP3 (via ARM repeats); the interaction may be involved in PKP3 protein degradation. Post-translationally, phosphorylated by AKT1 and ILK1. Upon insulin-mediated signaling, the activated PKB/AKT1 and RPS6KA3 protein kinases phosphorylate and deactivate GSK3B, resulting in the dephosphorylation and activation of GYS1. Activated by phosphorylation at Tyr-216. Inactivated by phosphorylation at Ser-9. Phosphorylated in a circadian manner in the hippocampus. Mono-ADP-ribosylation by PARP10 negatively regulates kinase activity. In terms of processing, palmitoylated. Palmitoylation by ZDHHC4 prevents AKT1-mediated phosphorylation.

It localises to the cytoplasm. The protein resides in the nucleus. The protein localises to the membrane. It is found in the cell membrane. It catalyses the reaction L-seryl-[tau protein] + ATP = O-phospho-L-seryl-[tau protein] + ADP + H(+). The catalysed reaction is L-threonyl-[tau protein] + ATP = O-phospho-L-threonyl-[tau protein] + ADP + H(+). It carries out the reaction L-seryl-[protein] + ATP = O-phospho-L-seryl-[protein] + ADP + H(+). The enzyme catalyses L-threonyl-[protein] + ATP = O-phospho-L-threonyl-[protein] + ADP + H(+). With respect to regulation, activated by phosphorylation at Tyr-216. In response to insulin, inhibited by phosphorylation at Ser-9 by PKB/AKT1; phosphorylation at this site causes a conformational change, preventing access of substrates to the active site. Inhibited by IL22 treatment which also triggers phosphorylation at Ser-9, promoting inactivation. Inhibited by lithium. In terms of biological role, constitutively active protein kinase that acts as a negative regulator in the hormonal control of glucose homeostasis, Wnt signaling and regulation of transcription factors and microtubules, by phosphorylating and inactivating glycogen synthase (GYS1 or GYS2), EIF2B, CTNNB1/beta-catenin, APC, AXIN1, DPYSL2/CRMP2, JUN, NFATC1/NFATC, MAPT/TAU and MACF1. Requires primed phosphorylation of the majority of its substrates. In skeletal muscle, contributes to insulin regulation of glycogen synthesis by phosphorylating and inhibiting GYS1 activity and hence glycogen synthesis. May also mediate the development of insulin resistance by regulating activation of transcription factors. Regulates protein synthesis by controlling the activity of initiation factor 2B (EIF2BE/EIF2B5) in the same manner as glycogen synthase. In Wnt signaling, GSK3B forms a multimeric complex with APC, AXIN1 and CTNNB1/beta-catenin and phosphorylates the N-terminus of CTNNB1 leading to its degradation mediated by ubiquitin/proteasomes. Phosphorylates JUN at sites proximal to its DNA-binding domain, thereby reducing its affinity for DNA. Phosphorylates NFATC1/NFATC on conserved serine residues promoting NFATC1/NFATC nuclear export, shutting off NFATC1/NFATC gene regulation, and thereby opposing the action of calcineurin. Phosphorylates MAPT/TAU on 'Thr-548', decreasing significantly MAPT/TAU ability to bind and stabilize microtubules. MAPT/TAU is the principal component of neurofibrillary tangles in Alzheimer disease. Plays an important role in ERBB2-dependent stabilization of microtubules at the cell cortex. Phosphorylates MACF1, inhibiting its binding to microtubules which is critical for its role in bulge stem cell migration and skin wound repair. Probably regulates NF-kappa-B (NFKB1) at the transcriptional level and is required for the NF-kappa-B-mediated anti-apoptotic response to TNF-alpha (TNF/TNFA). Negatively regulates replication in pancreatic beta-cells, resulting in apoptosis, loss of beta-cells and diabetes. Through phosphorylation of the anti-apoptotic protein MCL1, may control cell apoptosis in response to growth factors deprivation. Phosphorylates MUC1 in breast cancer cells, decreasing the interaction of MUC1 with CTNNB1/beta-catenin. Is necessary for the establishment of neuronal polarity and axon outgrowth. Phosphorylates MARK2, leading to inhibition of its activity. Phosphorylates SIK1 at 'Thr-182', leading to sustainment of its activity. Phosphorylates ZC3HAV1 which enhances its antiviral activity. Phosphorylates SNAI1, leading to its ubiquitination and proteasomal degradation. Phosphorylates SFPQ at 'Thr-687' upon T-cell activation. Phosphorylates NR1D1 st 'Ser-55' and 'Ser-59' and stabilizes it by protecting it from proteasomal degradation. Regulates the circadian clock via phosphorylation of the major clock components including BMAL1, CLOCK and PER2. Phosphorylates CLOCK AT 'Ser-427' and targets it for proteasomal degradation. Phosphorylates BMAL1 at 'Ser-17' and 'Ser-21' and primes it for ubiquitination and proteasomal degradation. Phosphorylates FBXL2 at 'Thr-404' and primes it for ubiquitination by the SCF(FBXO3) complex and proteasomal degradation. Phosphorylates OGT at 'Ser-3' or 'Ser-4' which positively regulates its activity. Phosphorylates MYCN in neuroblastoma cells which may promote its degradation. Regulates the circadian rhythmicity of hippocampal long-term potentiation and BMAL1 and PER2 expression. Acts as a regulator of autophagy by mediating phosphorylation of KAT5/TIP60 under starvation conditions, activating KAT5/TIP60 acetyltransferase activity and promoting acetylation of key autophagy regulators, such as ULK1 and RUBCNL/Pacer. Negatively regulates extrinsic apoptotic signaling pathway via death domain receptors. Promotes the formation of an anti-apoptotic complex, made of DDX3X, BRIC2 and GSK3B, at death receptors, including TNFRSF10B. The anti-apoptotic function is most effective with weak apoptotic signals and can be overcome by stronger stimulation. Phosphorylates E2F1, promoting the interaction between E2F1 and USP11, stabilizing E2F1 and promoting its activity. Phosphorylates mTORC2 complex component RICTOR at 'Ser-1235' in response to endoplasmic stress, inhibiting mTORC2. Phosphorylates FXR1, promoting FXR1 ubiquitination by the SCF(FBXO4) complex and FXR1 degradation by the proteasome. Phosphorylates interleukin-22 receptor subunit IL22RA1, preventing its proteasomal degradation. The protein is Glycogen synthase kinase-3 beta of Rattus norvegicus (Rat).